Here is a 313-residue protein sequence, read N- to C-terminus: D-alanine--D-alanine ligase (313 aa).

An ATP-grasp domain is found at 104–304 (KQALVPHGIP…YSDLVEAIIA (201 aa)). 130-187 (PLPRPYVLKPVNEGSSVGVAIVTAEGNYGSPISAASKGPWQEFDQLLAEPFIRGRELT) lines the ATP pocket. Mg(2+) is bound by residues D255, E271, and N273.

It belongs to the D-alanine--D-alanine ligase family. It depends on Mg(2+) as a cofactor. The cofactor is Mn(2+).

It is found in the cytoplasm. The catalysed reaction is 2 D-alanine + ATP = D-alanyl-D-alanine + ADP + phosphate + H(+). Its pathway is cell wall biogenesis; peptidoglycan biosynthesis. Functionally, cell wall formation. The sequence is that of D-alanine--D-alanine ligase from Novosphingobium aromaticivorans (strain ATCC 700278 / DSM 12444 / CCUG 56034 / CIP 105152 / NBRC 16084 / F199).